The sequence spans 152 residues: Holo-[acyl-carrier-protein] synthase (152 aa).

Mg(2+)-binding residues include Asp7 and Glu60.

This sequence belongs to the P-Pant transferase superfamily. AcpS family. Mg(2+) serves as cofactor.

Its subcellular location is the cytoplasm. It carries out the reaction apo-[ACP] + CoA = holo-[ACP] + adenosine 3',5'-bisphosphate + H(+). In terms of biological role, transfers the 4'-phosphopantetheine moiety from coenzyme A to a Ser of acyl-carrier-protein. The protein is Holo-[acyl-carrier-protein] synthase of Bifidobacterium adolescentis (strain ATCC 15703 / DSM 20083 / NCTC 11814 / E194a).